The chain runs to 120 residues: Cell division topological specificity factor (120 aa).

A disordered region spans residues 93 to 120 (LNSCEGENPQQDPGAAPSEGGHLSSPSP).

It belongs to the MinE family.

Functionally, prevents the cell division inhibition by proteins MinC and MinD at internal division sites while permitting inhibition at polar sites. This ensures cell division at the proper site by restricting the formation of a division septum at the midpoint of the long axis of the cell. This Synechococcus sp. (strain JA-3-3Ab) (Cyanobacteria bacterium Yellowstone A-Prime) protein is Cell division topological specificity factor.